The chain runs to 352 residues: Dof zinc finger protein DOF1.8 (352 aa).

The disordered stretch occupies residues 24–46 (LKQQSNPPSPATPVERKARPEKD). The span at 37 to 46 (VERKARPEKD) shows a compositional bias: basic and acidic residues. Residues 49 to 103 (LNCPRCNSLNTKFCYYNNYSLTQPRYFCKDCRRYWTAGGSLRNIPVGGGVRKNKR) form a Dof-type zinc finger. Residues C51, C54, C76, and C79 each contribute to the Zn(2+) site. 2 disordered regions span residues 93-136 (PVGG…PLPH) and 265-334 (GGDP…VGFW). Low complexity predominate over residues 104 to 129 (SSSNSSSSSPSSSSSSKKPLFANNNT). A compositionally biased stretch (basic and acidic residues) spans 310 to 323 (ENNDEHSDHEHEKE).

The protein localises to the nucleus. Functionally, transcription factor that binds specifically to a 5'-AA[AG]G-3' consensus core sequence. In Arabidopsis thaliana (Mouse-ear cress), this protein is Dof zinc finger protein DOF1.8 (DOF1.8).